Consider the following 128-residue polypeptide: Protein BEX2 (128 aa).

Arg50 carries the post-translational modification Omega-N-methylarginine. The segment at 107–128 (SLRAVSTDPPHHDHHDEFCLMP) is disordered. Residues 115 to 128 (PPHHDHHDEFCLMP) show a composition bias toward basic and acidic residues. The segment at 117-121 (HHDHH) is his cluster. Cys125 provides a ligand contact to Zn(2+).

Belongs to the BEX family. In terms of assembly, interacts with LMO2, possibly leading to regulate the transcriptional activity of a DNA-binding complex containing LMO2. Interacts with OMP. As to expression, expressed in central nervous system, with high level in pituitary, cerebellum and temporal lobe. Widely expressed in breast cancer cell lines.

The protein localises to the cytoplasm. Its subcellular location is the nucleus. Functionally, regulator of mitochondrial apoptosis and G1 cell cycle in breast cancer. Protects the breast cancer cells against mitochondrial apoptosis and this effect is mediated through the modulation of BCL2 protein family, which involves the positive regulation of anti-apoptotic member BCL2 and the negative regulation of pro-apoptotic members BAD, BAK1 and PUMA. Required for the normal cell cycle progression during G1 in breast cancer cells through the regulation of CCND1 and CDKN1A. Regulates the level of PP2A regulatory subunit B and PP2A phosphatase activity. In absence of reductive stress, acts as a pseudosubstrate for the CRL2(FEM1B) complex: associates with FEM1B via zinc, thereby preventing association between FEM1B and its substrates. The protein is Protein BEX2 (BEX2) of Homo sapiens (Human).